The primary structure comprises 314 residues: Olfactory receptor 5B17 (314 aa).

Topologically, residues 1 to 23 (MENNTEVSEFILLGLTNAPELQV) are extracellular. Residue Asn-3 is glycosylated (N-linked (GlcNAc...) asparagine). The helical transmembrane segment at 24-44 (PLFIMFTLIYLITLTGNLGMI) threads the bilayer. The Cytoplasmic segment spans residues 45–52 (ILILLDSH). A helical transmembrane segment spans residues 53–73 (LHTPMYFFLSNLSLAGIGYSS). Over 74 to 97 (AVTPKVLTGLLIEDKAISYSACAA) the chain is Extracellular. Cys-95 and Cys-187 are disulfide-bonded. The chain crosses the membrane as a helical span at residues 98–118 (QMFFCAVFATVENYLLSSMAY). Residues 119 to 137 (DRYAAVCNPLHYTTTMTTR) lie on the Cytoplasmic side of the membrane. Residues 138-158 (VCACLAIGCYVIGFLNASIQI) form a helical membrane-spanning segment. Residues 159-194 (GDTFRLSFCMSNVIHHFFCDKPAVITLTCSEKHISE) are Extracellular-facing. The helical transmembrane segment at 195-215 (LILVLISSFNVFFALLVTLIS) threads the bilayer. Over 216-235 (YLFILITILKRHTGKGYQKP) the chain is Cytoplasmic. The chain crosses the membrane as a helical span at residues 236–256 (LSTCGSHLIAIFLFYITVIIM). The Extracellular portion of the chain corresponds to 257–269 (YIRPSSSHSMDTD). Residues 270 to 290 (KIASVFYTMIIPMLSPIVYTL) traverse the membrane as a helical segment. The Cytoplasmic segment spans residues 291-314 (RNKDVKNAFMKVVEKAKYSLDSVF).

The protein belongs to the G-protein coupled receptor 1 family.

The protein localises to the cell membrane. Odorant receptor. This is Olfactory receptor 5B17 (OR5B17) from Homo sapiens (Human).